The chain runs to 358 residues: Peptide chain release factor 1 (358 aa).

Glutamine 236 carries the N5-methylglutamine modification.

It belongs to the prokaryotic/mitochondrial release factor family. Post-translationally, methylated by PrmC. Methylation increases the termination efficiency of RF1.

The protein localises to the cytoplasm. Peptide chain release factor 1 directs the termination of translation in response to the peptide chain termination codons UAG and UAA. The chain is Peptide chain release factor 1 from Corynebacterium glutamicum (strain ATCC 13032 / DSM 20300 / JCM 1318 / BCRC 11384 / CCUG 27702 / LMG 3730 / NBRC 12168 / NCIMB 10025 / NRRL B-2784 / 534).